The primary structure comprises 73 residues: Large ribosomal subunit protein bL31 (73 aa).

Zn(2+) is bound by residues Cys-16, Cys-18, Cys-37, and Cys-40.

Belongs to the bacterial ribosomal protein bL31 family. Type A subfamily. As to quaternary structure, part of the 50S ribosomal subunit. It depends on Zn(2+) as a cofactor.

In terms of biological role, binds the 23S rRNA. The polypeptide is Large ribosomal subunit protein bL31 (Pseudomonas syringae pv. syringae (strain B728a)).